We begin with the raw amino-acid sequence, 358 residues long: tRNA-specific 2-thiouridylase MnmA (358 aa).

ATP-binding positions include 7-14 (AMSGGVDS) and Met33. Catalysis depends on Cys102, which acts as the Nucleophile. A disulfide bridge links Cys102 with Cys199. Gly126 is a binding site for ATP. The tract at residues 149-151 (KDQ) is interaction with tRNA. Cys199 acts as the Cysteine persulfide intermediate in catalysis. The interval 305–306 (RY) is interaction with tRNA.

The protein belongs to the MnmA/TRMU family.

Its subcellular location is the cytoplasm. The catalysed reaction is S-sulfanyl-L-cysteinyl-[protein] + uridine(34) in tRNA + AH2 + ATP = 2-thiouridine(34) in tRNA + L-cysteinyl-[protein] + A + AMP + diphosphate + H(+). Its function is as follows. Catalyzes the 2-thiolation of uridine at the wobble position (U34) of tRNA, leading to the formation of s(2)U34. The polypeptide is tRNA-specific 2-thiouridylase MnmA (Halothermothrix orenii (strain H 168 / OCM 544 / DSM 9562)).